The following is a 574-amino-acid chain: Probable cytochrome c oxidase subunit 1 (574 aa).

Residues 40–60 (IGIMYCVACFIFFFVGGLLAL) form a helical membrane-spanning segment. Fe(II)-heme a is bound at residue H86. Transmembrane regions (helical) follow at residues 89–109 (IMLLFYATPIVFGFANLVLPL), 121–141 (LNAFSFWLFLFGAAIGMAGFI), 170–190 (LWIMGLIVAGLGTILGAVNMI), 213–233 (ILVTSILVLIAFPLLTAALFG), 258–278 (LFWFFGHPEVYIIALPFFGIV), and 290–310 (IFGYTTLVYATLSIAALSVAV). Residues H264 and Y268 each contribute to the Cu cation site. A cross-link (1'-histidyl-3'-tyrosine (His-Tyr)) is located at residues 264-268 (HPEVY). H313 and H314 together coordinate Cu cation. 2 helical membrane-spanning segments follow: residues 315–335 (MFATGAVLLPFFSFMTYLIAV) and 359–379 (MLFSVGFAVTFLLGGLTGVLL). H397 contributes to the heme a3 binding site. Transmembrane regions (helical) follow at residues 398-418 (FHYVLFGTIVFSTFAGIYFWF), 433-453 (LHFWLTFIGFHTTFLVQHWLG), and 476-496 (VSTIGSFILGASMFPFVWNVF). H399 is a Fe(II)-heme a binding site.

Belongs to the heme-copper respiratory oxidase family. Associates with subunits II, III and IV to form cytochrome c oxidase. The cofactor is Cu(2+). It depends on heme as a cofactor.

It localises to the cell membrane. It carries out the reaction 4 Fe(II)-[cytochrome c] + O2 + 8 H(+)(in) = 4 Fe(III)-[cytochrome c] + 2 H2O + 4 H(+)(out). It participates in energy metabolism; oxidative phosphorylation. Its function is as follows. Cytochrome c oxidase is the component of the respiratory chain that catalyzes the reduction of oxygen to water. Subunits 1-3 form the functional core of the enzyme complex. CO I is the catalytic subunit of the enzyme. Electrons originating in cytochrome c are transferred via the copper A center of subunit 2 and heme A of subunit 1 to the bimetallic center formed by heme A3 and copper B. The polypeptide is Probable cytochrome c oxidase subunit 1 (ctaD) (Mycobacterium leprae (strain TN)).